Here is a 492-residue protein sequence, read N- to C-terminus: Malonyl-CoA decarboxylase, mitochondrial (492 aa).

The N-terminal 38 residues, 1 to 38, are a transit peptide targeting the mitochondrion; the sequence is MRGLGPSLRARRLLPLRYPPRPPGPRGPRLCSGLTASA. Positions 39-189 are alpha-helical domain; sequence MDELLRRAVP…VLKSMLSEWF (151 aa). Lys58 bears the N6-acetyllysine mark. Lys167 is subject to N6-acetyllysine; alternate. Lys167 bears the N6-succinyllysine; alternate mark. The catalytic domain stretch occupies residues 190 to 492; sequence SSGFLNLERV…VAQFQSNSKL (303 aa). Position 210 is an N6-acetyllysine (Lys210). Lys221 carries the post-translational modification N6-succinyllysine. 298–304 lines the malonyl-CoA pocket; it reads QGVELGT. Lys316 carries the post-translational modification N6-acetyllysine. Ser328 provides a ligand contact to malonyl-CoA. The active-site Proton acceptor is the Ser328. The residue at position 385 (Lys385) is an N6-acetyllysine; alternate. Lys385 carries the post-translational modification N6-succinyllysine; alternate. An N6-acetyllysine modification is found at Lys388. Malonyl-CoA is bound at residue His422. His422 functions as the Proton donor in the catalytic mechanism. Lys441 and Lys471 each carry N6-acetyllysine. Residues 490–492 carry the Microbody targeting signal motif; sequence SKL.

Homotetramer. Dimer of dimers. The two subunits within a dimer display conformational differences suggesting that at any given moment, only one of the two subunits is competent for malonyl-CoA binding and catalytic activity. Under oxidizing conditions, can form disulfide-linked homotetramers (in vitro). Associates with the peroxisomal targeting signal receptor PEX5. In terms of processing, acetylation at Lys-471 activates malonyl-CoA decarboxylase activity. Deacetylation at Lys-471 by SIRT4 represses activity, leading to promote lipogenesis. Post-translationally, interchain disulfide bonds may form in peroxisomes (Potential). Interchain disulfide bonds are not expected to form in the reducing environment of the cytoplasm and mitochondria. As to expression, expressed in liver, heart, skeletal muscles and adipose tissues (at protein level). Ubiquitous. Strongly expressed in liver, kidney, heart, skeletal muscle and adipose tissues. Weakly expressed in brain.

It is found in the cytoplasm. Its subcellular location is the mitochondrion matrix. The protein resides in the peroxisome. It localises to the peroxisome matrix. The catalysed reaction is malonyl-CoA + H(+) = acetyl-CoA + CO2. It participates in metabolic intermediate biosynthesis; acetyl-CoA biosynthesis; acetyl-CoA from malonyl-CoA: step 1/1. With respect to regulation, malonyl-CoA decarboxylase activity does not require any cofactors or divalent metal ions. Its function is as follows. Catalyzes the conversion of malonyl-CoA to acetyl-CoA. In the fatty acid biosynthesis MCD selectively removes malonyl-CoA and thus assures that methyl-malonyl-CoA is the only chain elongating substrate for fatty acid synthase and that fatty acids with multiple methyl side chains are produced. In peroxisomes it may be involved in degrading intraperoxisomal malonyl-CoA, which is generated by the peroxisomal beta-oxidation of odd chain-length dicarboxylic fatty acids. Plays a role in the metabolic balance between glucose and lipid oxidation in muscle independent of alterations in insulin signaling. May play a role in controlling the extent of ischemic injury by promoting glucose oxidation. In Rattus norvegicus (Rat), this protein is Malonyl-CoA decarboxylase, mitochondrial.